The following is a 299-amino-acid chain: Cysteine synthase B (299 aa).

Lysine 45 is modified (N6-(pyridoxal phosphate)lysine). Residues asparagine 75, 178–182 (GTTGT), and serine 259 contribute to the pyridoxal 5'-phosphate site.

The protein belongs to the cysteine synthase/cystathionine beta-synthase family. Pyridoxal 5'-phosphate serves as cofactor.

It catalyses the reaction O-acetyl-L-serine + hydrogen sulfide = L-cysteine + acetate. It functions in the pathway amino-acid biosynthesis; L-cysteine biosynthesis; L-cysteine from L-serine: step 2/2. This is Cysteine synthase B (cysM) from Pseudomonas aeruginosa (strain ATCC 15692 / DSM 22644 / CIP 104116 / JCM 14847 / LMG 12228 / 1C / PRS 101 / PAO1).